Here is a 383-residue protein sequence, read N- to C-terminus: Probable L-aspartate decarboxylase (383 aa).

N6-(pyridoxal phosphate)lysine is present on Lys-231.

It belongs to the group II decarboxylase family. MfnA subfamily. Pyridoxal 5'-phosphate is required as a cofactor.

It catalyses the reaction L-aspartate + H(+) = beta-alanine + CO2. Its pathway is cofactor biosynthesis; coenzyme A biosynthesis. In terms of biological role, catalyzes the decarboxylation of L-aspartate to produce beta-alanine. The protein is Probable L-aspartate decarboxylase of Thermococcus gammatolerans (strain DSM 15229 / JCM 11827 / EJ3).